The following is a 310-amino-acid chain: Ribosomal RNA small subunit methyltransferase H (310 aa).

S-adenosyl-L-methionine is bound by residues 32 to 34 (GGH), D52, F79, D100, and Q107.

This sequence belongs to the methyltransferase superfamily. RsmH family.

It is found in the cytoplasm. It catalyses the reaction cytidine(1402) in 16S rRNA + S-adenosyl-L-methionine = N(4)-methylcytidine(1402) in 16S rRNA + S-adenosyl-L-homocysteine + H(+). In terms of biological role, specifically methylates the N4 position of cytidine in position 1402 (C1402) of 16S rRNA. This Bacillus cereus (strain G9842) protein is Ribosomal RNA small subunit methyltransferase H.